The primary structure comprises 269 residues: Formamidopyrimidine-DNA glycosylase (269 aa).

The active-site Schiff-base intermediate with DNA is the proline 2. The active-site Proton donor is glutamate 3. Residue lysine 57 is the Proton donor; for beta-elimination activity of the active site. Histidine 90, arginine 109, and lysine 150 together coordinate DNA. The segment at 235–269 (QVYGRAGEPCRQCGHPIEIAKHGQRSTFFCRHCQH) adopts an FPG-type zinc-finger fold. Arginine 259 acts as the Proton donor; for delta-elimination activity in catalysis.

It belongs to the FPG family. In terms of assembly, monomer. Requires Zn(2+) as cofactor.

The catalysed reaction is Hydrolysis of DNA containing ring-opened 7-methylguanine residues, releasing 2,6-diamino-4-hydroxy-5-(N-methyl)formamidopyrimidine.. It catalyses the reaction 2'-deoxyribonucleotide-(2'-deoxyribose 5'-phosphate)-2'-deoxyribonucleotide-DNA = a 3'-end 2'-deoxyribonucleotide-(2,3-dehydro-2,3-deoxyribose 5'-phosphate)-DNA + a 5'-end 5'-phospho-2'-deoxyribonucleoside-DNA + H(+). Involved in base excision repair of DNA damaged by oxidation or by mutagenic agents. Acts as a DNA glycosylase that recognizes and removes damaged bases. Has a preference for oxidized purines, such as 7,8-dihydro-8-oxoguanine (8-oxoG). Has AP (apurinic/apyrimidinic) lyase activity and introduces nicks in the DNA strand. Cleaves the DNA backbone by beta-delta elimination to generate a single-strand break at the site of the removed base with both 3'- and 5'-phosphates. The protein is Formamidopyrimidine-DNA glycosylase of Yersinia pseudotuberculosis serotype O:1b (strain IP 31758).